The chain runs to 160 residues: MNILLSIAITTGILSGIWGWGAVSLGLLSWAGFLGCTAYFACPQGGFKGLLISACTLLSGMVWALVIIHGSALAPHLEIVSYVLTGIVAFLMCIQAKQLLLSFVPGTFIGACATFAGQGDWRLVLPSLALGLIFGYAMKNSGLWLASRREQHSANTAVTK.

Helical transmembrane passes span 20-42, 50-70, 72-92, 99-119, and 123-143; these read WGAV…YFAC, LLIS…IIHG, ALAP…AFLM, LLLS…AGQG, and LVLP…NSGL.

It to E.coli YahC.

It localises to the cell inner membrane. The polypeptide is Inner membrane protein YcdZ (ycdZ) (Salmonella typhimurium (strain LT2 / SGSC1412 / ATCC 700720)).